The primary structure comprises 188 residues: MTATSPYLELGYVARAHGLRGEVAIRALDPASETLDTVDRIWVRTRAGVEREMRLEALRPTPKEDIVVLEGVESRNDAEALVGAKVFVFREDLEPPAEGEFFQGDLVGLDAVDANGNALGRVEEIWTTGEVPNLVIRASGREELVVPFADEFVPTVDLEARRIVIHPPEYVEAGRKGAESGGGPEDAE.

Residues 98-171 enclose the PRC barrel domain; that stretch reads EGEFFQGDLV…RIVIHPPEYV (74 aa).

It belongs to the RimM family. Binds ribosomal protein uS19.

It is found in the cytoplasm. Functionally, an accessory protein needed during the final step in the assembly of 30S ribosomal subunit, possibly for assembly of the head region. Essential for efficient processing of 16S rRNA. May be needed both before and after RbfA during the maturation of 16S rRNA. It has affinity for free ribosomal 30S subunits but not for 70S ribosomes. This chain is Ribosome maturation factor RimM, found in Myxococcus xanthus (strain DK1622).